A 349-amino-acid chain; its full sequence is Isopentenyl-diphosphate delta-isomerase (349 aa).

Position 6 to 7 (Arg-6 to Lys-7) interacts with substrate. FMN-binding positions include Ala-62–Thr-64, Ser-93, and Asn-122. Residue Gln-152 participates in substrate binding. Glu-153 lines the Mg(2+) pocket. FMN contacts are provided by residues Lys-184, Thr-214, Gly-258–Gly-259, and Ala-280–Gly-281.

Belongs to the IPP isomerase type 2 family. In terms of assembly, homooctamer. Dimer of tetramers. FMN is required as a cofactor. It depends on NADPH as a cofactor. Requires Mg(2+) as cofactor.

It localises to the cytoplasm. It carries out the reaction isopentenyl diphosphate = dimethylallyl diphosphate. In terms of biological role, involved in the biosynthesis of isoprenoids. Catalyzes the 1,3-allylic rearrangement of the homoallylic substrate isopentenyl (IPP) to its allylic isomer, dimethylallyl diphosphate (DMAPP). The sequence is that of Isopentenyl-diphosphate delta-isomerase from Bacillus cereus (strain AH820).